The following is a 212-amino-acid chain: Octanoyltransferase (212 aa).

In terms of domain architecture, BPL/LPL catalytic spans 31–209 (AETQDEIWLV…HFADLLGYNI (179 aa)). Substrate-binding positions include 70–77 (RGGQITYH), 138–140 (SLG), and 151–153 (GLA). Catalysis depends on Cys-169, which acts as the Acyl-thioester intermediate.

Belongs to the LipB family.

Its subcellular location is the cytoplasm. It catalyses the reaction octanoyl-[ACP] + L-lysyl-[protein] = N(6)-octanoyl-L-lysyl-[protein] + holo-[ACP] + H(+). It functions in the pathway protein modification; protein lipoylation via endogenous pathway; protein N(6)-(lipoyl)lysine from octanoyl-[acyl-carrier-protein]: step 1/2. Catalyzes the transfer of endogenously produced octanoic acid from octanoyl-acyl-carrier-protein onto the lipoyl domains of lipoate-dependent enzymes. Lipoyl-ACP can also act as a substrate although octanoyl-ACP is likely to be the physiological substrate. This chain is Octanoyltransferase, found in Haemophilus influenzae (strain PittGG).